A 1128-amino-acid chain; its full sequence is Membrane-associated guanylate kinase, WW and PDZ domain-containing protein 3 (1128 aa).

The PDZ 1 domain maps to W22 to G108. The Guanylate kinase-like domain maps to R116–R290. Position 123-130 (F123–H130) interacts with ATP. Positions T184–N276 are disordered. Pro residues predominate over residues P193–P204. The segment covering L238 to K247 has biased composition (acidic residues). Positions E257–D267 are enriched in basic and acidic residues. 2 WW domains span residues E295–L328 and G341–L374. PDZ domains follow at residues R412–R494 and T581–R657. The disordered stretch occupies residues G658 to Q688. PDZ domains follow at residues D728–R810 and D852–E939. 2 disordered regions span residues E939–V985 and L999–Q1018. Composition is skewed to polar residues over residues S946–A956 and A965–R974. Residues P1024–T1106 form the PDZ 6 domain.

The protein belongs to the MAGUK family.

Its subcellular location is the cell membrane. The protein localises to the cell junction. It localises to the tight junction. In terms of biological role, acts as a scaffolding protein at cell-cell junctions, thereby regulating various cellular and signaling processes. This chain is Membrane-associated guanylate kinase, WW and PDZ domain-containing protein 3 (MAGI3), found in Gallus gallus (Chicken).